The primary structure comprises 157 residues: CASP-like protein 1 (157 aa).

Residues 1 to 13 (MKTEARDGGSEWR) lie on the Cytoplasmic side of the membrane. Residues 14–34 (WVAIFELFLRLAAIVSTSVAV) traverse the membrane as a helical segment. Residues 35–40 (YAAMGK) lie on the Extracellular side of the membrane. Residues 41–61 (IFVVAVNGVACFYLLMSLPVS) form a helical membrane-spanning segment. The Cytoplasmic segment spans residues 62-82 (IFNIMRPHAYPANRVFLNIMD). Residues 83–103 (MVMVALVTAGALAAGIVYLVE) traverse the membrane as a helical segment. Over 104–121 (KAGNARASWVSVWSQFDS) the chain is Extracellular. A helical membrane pass occupies residues 122–142 (SSCFAVLALILHVLLSGVILY). Over 143 to 157 (KQALNIKFKKLDSVD) the chain is Cytoplasmic.

The protein belongs to the Casparian strip membrane proteins (CASP) family. As to quaternary structure, homodimer and heterodimers.

It is found in the cell membrane. The sequence is that of CASP-like protein 1 from Picea sitchensis (Sitka spruce).